The sequence spans 213 residues: LexA repressor 2 (213 aa).

Positions 27-47 (QTEIARAFGFKGVRAAQYHLE) form a DNA-binding region, H-T-H motif. Residues Ser133 and Lys170 each act as for autocatalytic cleavage activity in the active site.

This sequence belongs to the peptidase S24 family. Homodimer.

The catalysed reaction is Hydrolysis of Ala-|-Gly bond in repressor LexA.. Its function is as follows. Represses a number of genes involved in the response to DNA damage (SOS response), including recA and lexA. In the presence of single-stranded DNA, RecA interacts with LexA causing an autocatalytic cleavage which disrupts the DNA-binding part of LexA, leading to derepression of the SOS regulon and eventually DNA repair. In Xanthomonas campestris pv. campestris (strain ATCC 33913 / DSM 3586 / NCPPB 528 / LMG 568 / P 25), this protein is LexA repressor 2.